The primary structure comprises 536 residues: Chaperonin GroEL 2 (536 aa).

ATP contacts are provided by residues 29–32 (TLGP), 86–90 (DGTTT), Gly412, and Asp495.

The protein belongs to the chaperonin (HSP60) family. As to quaternary structure, forms a cylinder of 14 subunits composed of two heptameric rings stacked back-to-back. Interacts with the co-chaperonin GroES.

The protein resides in the cytoplasm. The catalysed reaction is ATP + H2O + a folded polypeptide = ADP + phosphate + an unfolded polypeptide.. In terms of biological role, together with its co-chaperonin GroES, plays an essential role in assisting protein folding. The GroEL-GroES system forms a nano-cage that allows encapsulation of the non-native substrate proteins and provides a physical environment optimized to promote and accelerate protein folding. In Arthrobacter sp. (strain FB24), this protein is Chaperonin GroEL 2.